Consider the following 489-residue polypeptide: Anthranilate synthase component 1 1 (489 aa).

262–264 lines the L-tryptophan pocket; that stretch reads PYS. The segment at 288-309 is disordered; that stretch reads DRIETEPIAGTRPRGETPDADD. 297-298 contacts chorismate; the sequence is GT. Basic and acidic residues predominate over residues 300-309; the sequence is PRGETPDADD. Glutamate 324 contacts Mg(2+). Residues tyrosine 412, arginine 432, 446-448, and glycine 448 each bind chorismate; that span reads GAG. Glutamate 461 serves as a coordination point for Mg(2+).

The protein belongs to the anthranilate synthase component I family. As to quaternary structure, tetramer of two components I and two components II. The cofactor is Mg(2+).

It catalyses the reaction chorismate + L-glutamine = anthranilate + pyruvate + L-glutamate + H(+). It participates in amino-acid biosynthesis; L-tryptophan biosynthesis; L-tryptophan from chorismate: step 1/5. The protein is Anthranilate synthase component 1 1 (trpE1) of Haloarcula marismortui (strain ATCC 43049 / DSM 3752 / JCM 8966 / VKM B-1809) (Halobacterium marismortui).